Here is a 940-residue protein sequence, read N- to C-terminus: Chordin (940 aa).

Residues Met1 to Gly19 form the signal peptide. The 77-residue stretch at Ser42–Pro118 folds into the VWFC 1 domain. 4 consecutive CHRD domains span residues Thr162–Ala277, Phe279–Ser398, Ser404–Tyr519, and Arg525–His652. Asn347 and Asn430 each carry an N-linked (GlcNAc...) asparagine glycan. 3 consecutive VWFC domains span residues His689–Glu748, Glu767–Pro836, and Arg855–Ile919.

The protein belongs to the chordin family. As to quaternary structure, interacts with twsg1 and/or bmp4. Post-translationally, cleaved by tolloid proteases; cleavage participates in dorsoventral patterning during early development.

The protein resides in the secreted. Its function is as follows. Dorsalizing factor. Key developmental protein that dorsalizes early vertebrate embryonic tissues by binding to ventralizing TGF-beta family bone morphogenetic proteins (BMPs) and sequestering them in latent complexes. The chain is Chordin (chd) from Danio rerio (Zebrafish).